The following is a 562-amino-acid chain: Oxygen-dependent choline dehydrogenase (562 aa).

Residue 4–33 (DYIIIGAGSAGNVLATRLTEDPNTTVLLLE) coordinates FAD. His473 acts as the Proton acceptor in catalysis.

This sequence belongs to the GMC oxidoreductase family. FAD is required as a cofactor.

It carries out the reaction choline + A = betaine aldehyde + AH2. The catalysed reaction is betaine aldehyde + NAD(+) + H2O = glycine betaine + NADH + 2 H(+). The protein operates within amine and polyamine biosynthesis; betaine biosynthesis via choline pathway; betaine aldehyde from choline (cytochrome c reductase route): step 1/1. Involved in the biosynthesis of the osmoprotectant glycine betaine. Catalyzes the oxidation of choline to betaine aldehyde and betaine aldehyde to glycine betaine at the same rate. In Escherichia coli (strain SMS-3-5 / SECEC), this protein is Oxygen-dependent choline dehydrogenase.